We begin with the raw amino-acid sequence, 310 residues long: Porphobilinogen deaminase (310 aa).

Residue C243 is modified to S-(dipyrrolylmethanemethyl)cysteine.

It belongs to the HMBS family. Monomer. The cofactor is dipyrromethane.

The catalysed reaction is 4 porphobilinogen + H2O = hydroxymethylbilane + 4 NH4(+). It participates in porphyrin-containing compound metabolism; protoporphyrin-IX biosynthesis; coproporphyrinogen-III from 5-aminolevulinate: step 2/4. In terms of biological role, tetrapolymerization of the monopyrrole PBG into the hydroxymethylbilane pre-uroporphyrinogen in several discrete steps. The chain is Porphobilinogen deaminase from Methylobacillus flagellatus (strain ATCC 51484 / DSM 6875 / VKM B-1610 / KT).